The primary structure comprises 468 residues: MGRGWGFLFGLLGAVWLLSSGHGEEQPPETAAQRCFCQVSGYLDDCTCDVETIDRFNNYRLFPRLQKLLESDYFRYYKVNLKRPCPFWNDISQCGRRDCAVKPCQSDEVPDGIKSASYKYSEEANNLIEECEQAERLGAVDESLSEETQKAVLQWTKHDDSSDNFCEADDIQSPEAEYVDLLLNPERYTGYKGPDAWKIWNVIYEENCFKPQTIKRPLNPLASGQGTSEENTFYSWLEGLCVEKRAFYRLISGLHASINVHLSARYLLQETWLEKKWGHNITEFQQRFDGILTEGEGPRRLKNLYFLYLIELRALSKVLPFFERPDFQLFTGNKIQDEENKMLLLEILHEIKSFPLHFDENSFFAGDKKEAHKLKEDFRLHFRNISRIMDCVGCFKCRLWGKLQTQGLGTALKILFSEKLIANMPESGPSYEFHLTRQEIVSLFNAFGRISTSVKELENFRNLLQNIH.

Positions 1-23 are cleaved as a signal peptide; sequence MGRGWGFLFGLLGAVWLLSSGHG. 8 disulfides stabilise this stretch: Cys-35-Cys-48, Cys-37-Cys-46, Cys-85-Cys-391, Cys-94-Cys-99, Cys-94-Cys-131, Cys-99-Cys-104, Cys-208-Cys-241, and Cys-394-Cys-397. 2 positions are modified to phosphoserine: Ser-106 and Ser-143. The residue at position 145 (Ser-145) is a Phosphoserine; by FAM20C. 3 residues coordinate FAD: Arg-187, Thr-189, and Trp-200. FAD-binding residues include Ser-252 and His-255. Residue Asn-280 is glycosylated (N-linked (GlcNAc...) asparagine). FAD is bound by residues Arg-287 and Arg-300. An N-linked (GlcNAc...) asparagine glycan is attached at Asn-384.

Belongs to the EROs family. In terms of assembly, predominantly monomer. May function both as a monomer and a homodimer. Interacts with PDILT. Interacts with ERP44; the interaction results in retention of ERO1A in the endoplasmic reticulum. FAD is required as a cofactor. Post-translationally, N-glycosylated. The Cys-94/Cys-99 and Cys-394/Cys-397 disulfide bonds constitute the redox-active center. The Cys-94/Cys-99 disulfide bond may accept electron from P4HB and funnel them to the active site disulfide Cys-394/Cys-397. The regulatory Cys-99/Cys-104 disulfide bond stabilizes the other regulatory bond Cys-94/Cys-131. In terms of processing, phosphorylated on Ser-145 by FAM20C in the Golgi which increases its enzymatic activity. Phosphorylation is induced by lactation. It is also induced by hypoxia and reductive stress. In terms of tissue distribution, widely expressed at low level. Expressed at high level in upper digestive tract. Highly expressed in esophagus. Weakly expressed in stomach and duodenum.

The protein localises to the endoplasmic reticulum membrane. The protein resides in the golgi apparatus lumen. Its subcellular location is the secreted. It localises to the cell projection. It is found in the dendrite. Enzyme activity is tightly regulated to prevent the accumulation of reactive oxygen species in the endoplasmic reticulum. Reversibly down-regulated by the formation of disulfide bonds between the active site Cys-94 and Cys-131, and between Cys-99 and Cys-104. Glutathione may be required to regulate its activity in the endoplasmic reticulum. Its function is as follows. Oxidoreductase involved in disulfide bond formation in the endoplasmic reticulum. Efficiently reoxidizes P4HB/PDI, the enzyme catalyzing protein disulfide formation, in order to allow P4HB to sustain additional rounds of disulfide formation. Following P4HB reoxidation, passes its electrons to molecular oxygen via FAD, leading to the production of reactive oxygen species (ROS) in the cell. Required for the proper folding of immunoglobulins. Plays an important role in ER stress-induced, CHOP-dependent apoptosis by activating the inositol 1,4,5-trisphosphate receptor IP3R1. Involved in the release of the unfolded cholera toxin from reduced P4HB/PDI in case of infection by V.cholerae, thereby playing a role in retrotranslocation of the toxin. The polypeptide is ERO1-like protein alpha (Homo sapiens (Human)).